A 248-amino-acid polypeptide reads, in one-letter code: Stress-related protein (248 aa).

It belongs to the REF/SRPP family.

The sequence is that of Stress-related protein (SRP) from Vitis riparia (Frost grape).